The following is a 463-amino-acid chain: NADH dehydrogenase [ubiquinone] iron-sulfur protein 2, mitochondrial (463 aa).

A mitochondrion-targeting transit peptide spans 1–33; it reads MAALRALCGFRGVAAQVLRPGAGVRLPIQPSRG. K62 bears the N6-acetyllysine mark. R118 is subject to Symmetric dimethylarginine. Positions 326, 332, and 347 each coordinate [4Fe-4S] cluster.

It belongs to the complex I 49 kDa subunit family. In terms of assembly, core subunit of respiratory chain NADH dehydrogenase (Complex I) which is composed of 45 different subunits. Component of the iron-sulfur (IP) fragment of the enzyme. Interacts with NDUFAF3. Interacts with NDUFAF7. Interacts with CERS2. It depends on [4Fe-4S] cluster as a cofactor. Dimethylation at Arg-118 by NDUFAF7 takes place after NDUFS2 assembles into the complex I, leading to stabilize the early intermediate complex.

It is found in the mitochondrion inner membrane. The enzyme catalyses a ubiquinone + NADH + 5 H(+)(in) = a ubiquinol + NAD(+) + 4 H(+)(out). Core subunit of the mitochondrial membrane respiratory chain NADH dehydrogenase (Complex I) which catalyzes electron transfer from NADH through the respiratory chain, using ubiquinone as an electron acceptor. Essential for the catalytic activity of complex I. Essential for the assembly of complex I. Redox-sensitive, critical component of the oxygen-sensing pathway in the pulmonary vasculature which plays a key role in acute pulmonary oxygen-sensing and hypoxic pulmonary vasoconstriction. Plays an important role in carotid body sensing of hypoxia. Essential for glia-like neural stem and progenitor cell proliferation, differentiation and subsequent oligodendrocyte or neuronal maturation. This Homo sapiens (Human) protein is NADH dehydrogenase [ubiquinone] iron-sulfur protein 2, mitochondrial (NDUFS2).